The primary structure comprises 403 residues: Tyrosine--tRNA ligase (403 aa).

Positions 45–54 (PTAPDLHLGH) match the 'HIGH' region motif. Residues 229-233 (KMSKS) carry the 'KMSKS' region motif. Lys232 lines the ATP pocket. The region spanning 341-402 (VALCRLLAEA…GKRRFARITF (62 aa)) is the S4 RNA-binding domain.

It belongs to the class-I aminoacyl-tRNA synthetase family. TyrS type 2 subfamily. Homodimer.

The protein localises to the cytoplasm. It catalyses the reaction tRNA(Tyr) + L-tyrosine + ATP = L-tyrosyl-tRNA(Tyr) + AMP + diphosphate + H(+). Its function is as follows. Catalyzes the attachment of tyrosine to tRNA(Tyr) in a two-step reaction: tyrosine is first activated by ATP to form Tyr-AMP and then transferred to the acceptor end of tRNA(Tyr). In Geobacter sulfurreducens (strain ATCC 51573 / DSM 12127 / PCA), this protein is Tyrosine--tRNA ligase.